A 401-amino-acid chain; its full sequence is Chromatin modification-related protein EAF3 (401 aa).

A Tudor-knot domain is found at 13–98 (RCLAFHGPLM…DEWVGYDRIR (86 aa)). Over residues 39–53 (TSIPNDKPGGSSQAT) the composition is skewed to polar residues. 2 disordered regions span residues 39–65 (TSIPNDKPGGSSQATKEIKPQKLGEDE) and 117–210 (EAKK…NMLH). Composition is skewed to basic and acidic residues over residues 54-63 (KEIKPQKLGE) and 117-126 (EAKKSLLEQQ). The span at 153-190 (SISKSTSQSFLTSSVSGRKSGRSSANSLHPGSSLRSSS) shows a compositional bias: low complexity. Residue Ser201 is modified to Phosphoserine. The MRG domain maps to 216–399 (PTPKISLQIP…TSSQYEGVAL (184 aa)).

It belongs to the MRG family. In terms of assembly, component of the NuA4 histone acetyltransferase complex composed of at least ACT1, ARP4, YAF9, VID21, SWC4, EAF3, EAF5, EAF6, EAF7, EPL1, ESA1, TRA1 and YNG2.

It localises to the nucleus. Its function is as follows. Component of the NuA4 histone acetyltransferase complex which is involved in transcriptional activation of selected genes principally by acetylation of nucleosomal histone H4 and H2A. The NuA4 complex is also involved in DNA repair. The chain is Chromatin modification-related protein EAF3 (EAF3) from Saccharomyces cerevisiae (strain ATCC 204508 / S288c) (Baker's yeast).